A 353-amino-acid chain; its full sequence is Photosystem II D2 protein (353 aa).

Thr2 carries the post-translational modification N-acetylthreonine. Residue Thr2 is modified to Phosphothreonine. The chain crosses the membrane as a helical span at residues 41–61; sequence CAYFAVGGWFTGTTFVTSWYT. Position 118 (His118) interacts with chlorophyll a. A helical membrane pass occupies residues 125–141; it reads GFMLRQFELARSVQLRP. The pheophytin a site is built by Gln130 and Asn143. The helical transmembrane segment at 153 to 166 threads the bilayer; the sequence is VFVSVFLIYPLGQS. His198 contributes to the chlorophyll a binding site. Residues 208–228 traverse the membrane as a helical segment; that stretch reads AALLCAIHGATVENTLFEDGD. His215 and Phe262 together coordinate a plastoquinone. His215 is a Fe cation binding site. His269 contacts Fe cation. The chain crosses the membrane as a helical span at residues 279 to 295; sequence GLWMSALGVVGLALNLR.

Belongs to the reaction center PufL/M/PsbA/D family. In terms of assembly, PSII is composed of 1 copy each of membrane proteins PsbA, PsbB, PsbC, PsbD, PsbE, PsbF, PsbH, PsbI, PsbJ, PsbK, PsbL, PsbM, PsbT, PsbX, PsbY, PsbZ, Psb30/Ycf12, at least 3 peripheral proteins of the oxygen-evolving complex and a large number of cofactors. It forms dimeric complexes. The cofactor is The D1/D2 heterodimer binds P680, chlorophylls that are the primary electron donor of PSII, and subsequent electron acceptors. It shares a non-heme iron and each subunit binds pheophytin, quinone, additional chlorophylls, carotenoids and lipids. There is also a Cl(-1) ion associated with D1 and D2, which is required for oxygen evolution. The PSII complex binds additional chlorophylls, carotenoids and specific lipids..

The protein resides in the plastid. It localises to the chloroplast thylakoid membrane. It carries out the reaction 2 a plastoquinone + 4 hnu + 2 H2O = 2 a plastoquinol + O2. Its function is as follows. Photosystem II (PSII) is a light-driven water:plastoquinone oxidoreductase that uses light energy to abstract electrons from H(2)O, generating O(2) and a proton gradient subsequently used for ATP formation. It consists of a core antenna complex that captures photons, and an electron transfer chain that converts photonic excitation into a charge separation. The D1/D2 (PsbA/PsbD) reaction center heterodimer binds P680, the primary electron donor of PSII as well as several subsequent electron acceptors. D2 is needed for assembly of a stable PSII complex. The sequence is that of Photosystem II D2 protein from Nicotiana tabacum (Common tobacco).